The sequence spans 303 residues: Vesicle-trafficking protein SEC22c (303 aa).

The Cytoplasmic segment spans residues Met-1–Pro-183. One can recognise a Longin domain in the interval Ser-8–Ile-119. Residues Val-184–Ile-204 traverse the membrane as a helical segment. The Lumenal portion of the chain corresponds to Arg-205–Asn-223. Residues Ile-224–Tyr-244 form a helical membrane-spanning segment. The Cytoplasmic portion of the chain corresponds to Ser-245–Arg-248. The chain crosses the membrane as a helical span at residues Thr-249–Leu-269. Arg-270 is a topological domain (lumenal). The helical transmembrane segment at Asn-271–Thr-291 threads the bilayer. Residues Arg-292–Val-303 are Cytoplasmic-facing.

It belongs to the synaptobrevin family.

It is found in the endoplasmic reticulum membrane. May be involved in vesicle transport between the ER and the Golgi complex. This is Vesicle-trafficking protein SEC22c (Sec22c) from Mus musculus (Mouse).